A 513-amino-acid polypeptide reads, in one-letter code: Histidine ammonia-lyase (513 aa).

Positions 145 to 147 (ASG) form a cross-link, 5-imidazolinone (Ala-Gly). 2,3-didehydroalanine (Ser) is present on Ser146.

This sequence belongs to the PAL/histidase family. In terms of processing, contains an active site 4-methylidene-imidazol-5-one (MIO), which is formed autocatalytically by cyclization and dehydration of residues Ala-Ser-Gly.

It localises to the cytoplasm. It carries out the reaction L-histidine = trans-urocanate + NH4(+). The protein operates within amino-acid degradation; L-histidine degradation into L-glutamate; N-formimidoyl-L-glutamate from L-histidine: step 1/3. This is Histidine ammonia-lyase from Vibrio vulnificus (strain YJ016).